The chain runs to 535 residues: Dual specificity mitogen-activated protein kinase kinase 7 (535 aa).

Ala-2 is subject to N-acetylalanine. Residues 2–30 adopt a coiled-coil conformation; the sequence is AASSLEQKLSRLEAKLKQENREARRRIDL. Positions 37-73 are d domain; that stretch reads QRPRPIIVITLSPAPAPSQRAALQLPLANDGGSRSPS. A disordered region spans residues 63–93; the sequence is LANDGGSRSPSSESSPQHPTPPTRPRHMLGL. Residues 69–79 show a composition bias toward low complexity; sequence SRSPSSESSPQ. Residues 136–396 form the Protein kinase domain; it reads LENLGEMGSG…YNKLLEHSFI (261 aa). Residues 142-150 and Lys-165 contribute to the ATP site; that span reads MGSGTCGQV. Asp-259 serves as the catalytic Proton acceptor. Ser-287 carries the post-translational modification Phosphoserine; by MAP3K. Thr-291 is subject to Phosphothreonine; by MAP3K. The segment at 393-416 is DVD domain; that stretch reads HSFIKHYEILEVDVASWFKDVMAK. Residue Ser-427 is modified to Phosphoserine.

It belongs to the protein kinase superfamily. STE Ser/Thr protein kinase family. MAP kinase kinase subfamily. Interacts with RASSF7, the interaction promotes phosphorylation. Interacts with VRK2. Interacts (via its D domain) with its substrates MAPK8/JNK1, MAPK9/JNK2 and MAPK10/JNK3. Interacts (via its DVD domain) with MAP3Ks activators like MAP3K5/ASK1 and MAP3K1/MEKK1. Interacts with SH3RF1, MAPK8IP1/JIP1, MAPK8IP2/JIP2 and MAPK8IP3/JIP3 scaffold proteins. Found in a complex with SH3RF1, RAC1, MAP3K11/MLK3, MAPK8IP1/JIP1 and MAPK8/JNK1. Found in a complex with SH3RF1, RAC2, MAP3K7/TAK1, MAPK8IP1/JIP1, MAPK8/JNK1 and MAPK9/JNK2. It depends on Mg(2+) as a cofactor. In terms of processing, activated by phosphorylation on Ser-287 and Thr-291 by MAP kinase kinase kinases (MAP3Ks). Expressed at high levels in brain, lung, liver, skeletal muscle, kidney, and testis and at lower levels in the heart and spleen.

The protein localises to the nucleus. The protein resides in the cytoplasm. The catalysed reaction is L-seryl-[protein] + ATP = O-phospho-L-seryl-[protein] + ADP + H(+). The enzyme catalyses L-threonyl-[protein] + ATP = O-phospho-L-threonyl-[protein] + ADP + H(+). It catalyses the reaction L-tyrosyl-[protein] + ATP = O-phospho-L-tyrosyl-[protein] + ADP + H(+). Activated by phosphorylation by specific MAP kinase kinase kinases such as MAP3K1/MEKK1, MAP3K3/MEKK3, MAP3K11/MLK3 and MAP3K12/DLK. Isoforms 3 and 4 have lower basal activity but a higher level of inducible activation, than isoforms 2, 6, 7 and 8. Its function is as follows. Dual specificity protein kinase which acts as an essential component of the MAP kinase signal transduction pathway. Essential component of the stress-activated protein kinase/c-Jun N-terminal kinase (SAP/JNK) signaling pathway. With MAP2K4/MKK4, is the one of the only known kinase to directly activate the stress-activated protein kinase/c-Jun N-terminal kinases MAPK8/JNK1, MAPK9/JNK2 and MAPK10/JNK3. MAP2K4/MKK4 and MAP2K7/MKK7 both activate the JNKs by phosphorylation, but they differ in their preference for the phosphorylation site in the Thr-Pro-Tyr motif. MAP2K4/MKK4 shows preference for phosphorylation of the Tyr residue and MAP2K7/MKK7 for the Thr residue. The monophosphorylation of JNKs on the Thr residue is sufficient to increase JNK activity indicating that MAP2K7/MKK7 is important to trigger JNK activity, while the additional phosphorylation of the Tyr residue by MAP2K4/MKK4 ensures optimal JNK activation. Has a specific role in JNK signal transduction pathway activated by pro-inflammatory cytokines. The MKK/JNK signaling pathway is also involved in mitochondrial death signaling pathway, including the release cytochrome c, leading to apoptosis. Part of a non-canonical MAPK signaling pathway, composed of the upstream MAP3K12 kinase and downstream MAP kinases MAPK1/ERK2 and MAPK3/ERK1, that enhances the AP-1-mediated transcription of APP in response to APOE. This chain is Dual specificity mitogen-activated protein kinase kinase 7, found in Mus musculus (Mouse).